The following is a 214-amino-acid chain: Charged multivesicular body protein 2b (214 aa).

A coiled-coil region spans residues 16–55; it reads EQNKELRGTQRAITRDRAALEKQEKQLEMEIKKMAKAGNK. The disordered stretch occupies residues 178-203; sequence MAKAPSAAKGLPSTSASKSSGISDEE. Over residues 189-199 the composition is skewed to polar residues; sequence PSTSASKSSGI. The MIT-interacting motif motif lies at 202–212; it reads EEIERQLKALG.

Belongs to the SNF7 family. In terms of assembly, probable core component of the endosomal sorting required for transport complex III (ESCRT-III). ESCRT-III components are thought to multimerize to form a flat lattice on the perimeter membrane of the endosome.

It localises to the cytoplasm. It is found in the cytosol. Its subcellular location is the late endosome membrane. In terms of biological role, probable core component of the endosomal sorting required for transport complex III (ESCRT-III) which is involved in multivesicular bodies (MVBs) formation and sorting of endosomal cargo proteins into MVBs. MVBs contain intraluminal vesicles (ILVs) that are generated by invagination and scission from the limiting membrane of the endosome and mostly are delivered to lysosomes enabling degradation of membrane proteins, such as stimulated growth factor receptors, lysosomal enzymes and lipids. This is Charged multivesicular body protein 2b (chmp2b) from Xenopus tropicalis (Western clawed frog).